Consider the following 187-residue polypeptide: Holliday junction resolvase (187 aa).

It belongs to the RuvC family. Poxviruses-type subfamily. Mg(2+) serves as cofactor. In terms of processing, acylated by palmitic acid group(s).

The protein resides in the membrane. In terms of biological role, nuclease that specifically cleaves and resolves four-way DNA Holliday junctions into linear duplex products. In Vaccinia virus (strain Ankara) (VACV), this protein is Holliday junction resolvase.